Reading from the N-terminus, the 194-residue chain is Putative manganese efflux pump MntP (194 aa).

The next 6 helical transmembrane spans lie at 3–23 (PITI…AAIG), 37–57 (LYVA…GWLL), 65–85 (IATF…IHMI), 112–132 (LAAT…SLAF), 139–159 (IVAA…VMLG), and 170–190 (AEIV…YEHL).

Belongs to the MntP (TC 9.B.29) family.

Its subcellular location is the cell inner membrane. Probably functions as a manganese efflux pump. The sequence is that of Putative manganese efflux pump MntP from Xylella fastidiosa (strain 9a5c).